The following is a 290-amino-acid chain: ATP synthase gamma chain (290 aa).

It belongs to the ATPase gamma chain family. F-type ATPases have 2 components, CF(1) - the catalytic core - and CF(0) - the membrane proton channel. CF(1) has five subunits: alpha(3), beta(3), gamma(1), delta(1), epsilon(1). CF(0) has three main subunits: a, b and c.

It localises to the cell inner membrane. Its function is as follows. Produces ATP from ADP in the presence of a proton gradient across the membrane. The gamma chain is believed to be important in regulating ATPase activity and the flow of protons through the CF(0) complex. This Paracoccus denitrificans (strain Pd 1222) protein is ATP synthase gamma chain.